Consider the following 74-residue polypeptide: Conotoxin Im6.10 (74 aa).

A signal peptide spans 1–19 (MKTGMIICLLLIAFMDADG). Positions 20–47 (SPGDTLYSQKTADTDSGMKRFQKTFQKR) are excised as a propeptide. Disulfide bonds link Cys-49/Cys-58, Cys-52/Cys-63, and Cys-57/Cys-73.

As to expression, expressed by the venom duct.

The protein resides in the secreted. Its function is as follows. Probable neurotoxin. In Conus imperialis (Imperial cone), this protein is Conotoxin Im6.10.